We begin with the raw amino-acid sequence, 688 residues long: ERI1 exoribonuclease 2 (688 aa).

The region spanning 37-226 (LIVVDFESTC…DDSRNTALLA (190 aa)) is the Exonuclease domain. Mg(2+) contacts are provided by D41, E43, and D156. Catalysis depends on E43, which acts as the Proton acceptor. E43 provides a ligand contact to AMP. The Proton acceptor role is filled by H213. H213 lines the AMP pocket. D218 serves as a coordination point for Mg(2+). Positions 337–360 (VDQLHSPTLNPPLTMQKPSKSDQL) are enriched in polar residues. Disordered stretches follow at residues 337–367 (VDQL…DSSK) and 523–546 (DPLL…TKRQ). The Zn(2+) site is built by C594, C596, C619, and C631. The GRF-type zinc finger occupies 594-640 (CKCGRRSKRLIVSNNGPNHGKAFYCCPVGKYQQDRKCCGYFKWEQTL).

Belongs to the ERI2 family. Mg(2+) serves as cofactor.

In Mus musculus (Mouse), this protein is ERI1 exoribonuclease 2 (Eri2).